The chain runs to 548 residues: MISKINGKLFADMIIQGAQNLSNNADLVDSLNVYPVPDGDTGTNMNLTMTSGREEVENNLSKNIGELGKTFSKGLLMGARGNSGVILSQLFRGFCKNIESESEINSKLLAESFQAGVETAYKAVMKPVEGTILTVAKDAAQAAIEKANNTEDCIELMEYIIVKANESLENTPNLLAVLKEVGVVDSGGKGLLCVYEGFLKALKGEKVEAKVAKIDKDEFVHDEHDFHGVINTEDIIYGYCTEMMVRFGKNKKAFDEQEFRQDMSQFGDSLLVINDEEIVKVHVHTEYPGKVFNYGQQYGELIKLKVENMREQHREVIRKEQHTAKPKMETVETAIITISMGEGISEIFKSMGATHIISGGQTMNPSTEDIVKVIEQSKCKRAIILPNNKNILMASEQAASIVDAEAVVIPTKSIPQGISALFQYDVDATLEENKAQMADSVNNVKSGSLTYAVRDTKIDGVEIKKDAFMGLIEDKIVSSQSDQLTTVTELLNEMLAEDSEILTVIIGQDAEQAVTDNMINWIEEQYPDVEVEVHEGGQPIYQYFFSVE.

One can recognise a DhaL domain in the interval 8-200 (KLFADMIIQG…LLCVYEGFLK (193 aa)).

This is an uncharacterized protein from Staphylococcus aureus (strain NCTC 8325 / PS 47).